The sequence spans 1096 residues: DNA-directed RNA polymerase subunit beta (1096 aa).

Positions 1070-1096 are disordered; sequence LMQDVNPRRSTPSRPTYESLGSDYQED.

This sequence belongs to the RNA polymerase beta chain family. As to quaternary structure, in cyanobacteria the RNAP catalytic core is composed of 2 alpha, 1 beta, 1 beta', 1 gamma and 1 omega subunit. When a sigma factor is associated with the core the holoenzyme is formed, which can initiate transcription.

The catalysed reaction is RNA(n) + a ribonucleoside 5'-triphosphate = RNA(n+1) + diphosphate. In terms of biological role, DNA-dependent RNA polymerase catalyzes the transcription of DNA into RNA using the four ribonucleoside triphosphates as substrates. This is DNA-directed RNA polymerase subunit beta from Prochlorococcus marinus (strain MIT 9211).